The sequence spans 101 residues: Small ribosomal subunit protein uS14 (101 aa).

Belongs to the universal ribosomal protein uS14 family. Part of the 30S ribosomal subunit. Contacts proteins S3 and S10.

In terms of biological role, binds 16S rRNA, required for the assembly of 30S particles and may also be responsible for determining the conformation of the 16S rRNA at the A site. The sequence is that of Small ribosomal subunit protein uS14 from Opitutus terrae (strain DSM 11246 / JCM 15787 / PB90-1).